A 329-amino-acid chain; its full sequence is Ceramide synthase hyl-2 (329 aa).

Asparagine 22 carries an N-linked (GlcNAc...) asparagine glycan. A run of 7 helical transmembrane segments spans residues 41–61, 95–115, 134–154, 162–182, 187–207, 221–241, and 270–290; these read VLTGISLIIYRFVFENYIFVP, ALYYTISFVCGLYLVLHESHL, VAWYYWIQGGFYIALVFGILF, FWQMLVHHFITLALIGVSWTM, VGTLILVSHDAVDILIDVGKI, FAGVLFVWVATRLVYYPFWII, and FIMLLLTALLILHIFWAYILF. In terms of domain architecture, TLC spans 86 to 298; that stretch reads SRMAECAMRA…LFKIAYDTIQ (213 aa).

The protein belongs to the sphingosine N-acyltransferase family. In terms of tissue distribution, strong expression in the gut, the posterior bulb of the pharynx, the hypoderm, and unidentified cells of the head and the tail.

Its subcellular location is the membrane. The enzyme catalyses a very long-chain fatty acyl-CoA + a sphingoid base = an N-(very-long-chain fatty acyl)-sphingoid base + CoA + H(+). The catalysed reaction is a fatty acyl-CoA + sphinganine = an N-acylsphinganine + CoA + H(+). It catalyses the reaction docosanoyl-CoA + sphinganine = N-docosanoylsphinganine + CoA + H(+). It carries out the reaction sphinganine + tetradecanoyl-CoA = N-(tetradecanoyl)-sphinganine + CoA + H(+). The enzyme catalyses eicosanoyl-CoA + sphinganine = N-eicosanoylsphinganine + CoA + H(+). The catalysed reaction is 15-methylhexadecasphinganine + a fatty acyl-CoA = an N-acyl-15-methylhexadecasphinganine + CoA + H(+). The protein operates within lipid metabolism; sphingolipid metabolism. Functionally, catalyzes the acylation of sphingoid bases to form ceramides, which are key players in cell signaling events such as tolerances to heat, oxidation, and ultraviolet stress. C.elegans contain specific sphingoid bases, which are unique or different in structure compared to the sphingoid bases found in other animals. Two examples of these distinctive compounds are: 15-methylhexadecasphinganine and 15-methylhexadecasphing-4-enine. Exhibits substrate preference for long and very long fatty acyl-coA chains (C20-23). Required for adaptation of the nematode to anoxia. Anoxia tolerance may require one or more of the ceramide species that are either specifically or preferentially synthesized by HYL-2, and seems to be affected by a pathway that is parallel to that involving daf-2. This is Ceramide synthase hyl-2 (hyl-2) from Caenorhabditis elegans.